The primary structure comprises 323 residues: HPr kinase/phosphorylase (323 aa).

Residues H142 and K163 contribute to the active site. Residue G157 to S164 participates in ATP binding. S164 lines the Mg(2+) pocket. The active-site Proton acceptor; for phosphorylation activity. Proton donor; for dephosphorylation activity is the D181. The segment at L205–N214 is important for the catalytic mechanism of both phosphorylation and dephosphorylation. E206 is a Mg(2+) binding site. Residue R249 is part of the active site. Positions P270–R275 are important for the catalytic mechanism of dephosphorylation.

This sequence belongs to the HPrK/P family. In terms of assembly, homohexamer. Requires Mg(2+) as cofactor.

It catalyses the reaction [HPr protein]-L-serine + ATP = [HPr protein]-O-phospho-L-serine + ADP + H(+). The enzyme catalyses [HPr protein]-O-phospho-L-serine + phosphate + H(+) = [HPr protein]-L-serine + diphosphate. Catalyzes the ATP- as well as the pyrophosphate-dependent phosphorylation of a specific serine residue in HPr, a phosphocarrier protein of the phosphoenolpyruvate-dependent sugar phosphotransferase system (PTS). HprK/P also catalyzes the pyrophosphate-producing, inorganic phosphate-dependent dephosphorylation (phosphorolysis) of seryl-phosphorylated HPr (P-Ser-HPr). The chain is HPr kinase/phosphorylase from Nitrosomonas europaea (strain ATCC 19718 / CIP 103999 / KCTC 2705 / NBRC 14298).